A 342-amino-acid chain; its full sequence is MASVTRAVFGELPSGGGTVEKFQLQSDLLRVDIISWGCTITALEVKDRQGRASDVVLGFAELEGYLQKQPYFGAVIGRVANRIAKGTFKVDGKEYHLAINKEPNSLHGGVRGFDKVLWTPRVLSNGVQFSRISPDGEEGYPGELKVWVTYTLDGGELIVNYRAQASQATPVNLTNHSYFNLAGQASPNINDHEVTIEADTYLPVDETLIPTGEVAPVQGTAFDLRKPVELGKHLQDFHLNGFDHNFCLKGSKEKHFCARVHHAASGRVLEVYTTQPGVQFYTGNFLDGTLKGKNGAVYPKHSGFCLETQNWPDAVNQPRFPPVLLRPGEEYDHTTWFKFSVA.

Alanine 2 bears the N-acetylalanine mark. Serine 14 is subject to Phosphoserine. Beta-D-galactose is bound by residues 81-82 and histidine 107; that span reads NR. A Phosphoserine modification is found at serine 124. Histidine 176 (proton donor) is an active-site residue. Residues 176-178, aspartate 243, glutamine 279, and glutamate 307 contribute to the beta-D-galactose site; that span reads HSY. The active-site Proton acceptor is glutamate 307.

The protein belongs to the aldose epimerase family. As to quaternary structure, monomer.

Its subcellular location is the cytoplasm. It carries out the reaction alpha-D-galactose = beta-D-galactose. It catalyses the reaction alpha-D-glucose = beta-D-glucose. The protein operates within carbohydrate metabolism; hexose metabolism. It participates in carbohydrate metabolism; galactose metabolism. In terms of biological role, mutarotase that catalyzes the interconversion of beta-D-galactose and alpha-D-galactose during galactose metabolism. Beta-D-galactose is metabolized in the liver into glucose 1-phosphate, the primary metabolic fuel, by the action of four enzymes that constitute the Leloir pathway: GALM, GALK1 (galactokinase), GALT (galactose-1-phosphate uridylyltransferase) and GALE (UDP-galactose-4'-epimerase). Involved in the maintenance of the equilibrium between the beta- and alpha-anomers of galactose, therefore ensuring a sufficient supply of the alpha-anomer for GALK1. Also active on D-glucose although shows a preference for galactose over glucose. The chain is Galactose mutarotase from Homo sapiens (Human).